A 342-amino-acid polypeptide reads, in one-letter code: Uroporphyrinogen decarboxylase (342 aa).

Substrate is bound by residues 22–26, F42, D72, Y146, S201, and H317; that span reads RQAGR.

It belongs to the uroporphyrinogen decarboxylase family. In terms of assembly, homodimer.

It is found in the cytoplasm. It carries out the reaction uroporphyrinogen III + 4 H(+) = coproporphyrinogen III + 4 CO2. Its pathway is porphyrin-containing compound metabolism; protoporphyrin-IX biosynthesis; coproporphyrinogen-III from 5-aminolevulinate: step 4/4. In terms of biological role, catalyzes the decarboxylation of four acetate groups of uroporphyrinogen-III to yield coproporphyrinogen-III. In Orientia tsutsugamushi (strain Ikeda) (Rickettsia tsutsugamushi), this protein is Uroporphyrinogen decarboxylase.